The chain runs to 392 residues: uncharacterized protein (392 aa).

The protein belongs to the ROK (NagC/XylR) family.

This is an uncharacterized protein from Sinorhizobium fredii (strain NBRC 101917 / NGR234).